Here is a 113-residue protein sequence, read N- to C-terminus: uncharacterized protein (113 aa).

To H.pylori HP0245/JHP0230.

This is an uncharacterized protein from Campylobacter jejuni subsp. jejuni serotype O:2 (strain ATCC 700819 / NCTC 11168).